The primary structure comprises 145 residues: Leghemoglobin (145 aa).

The region spanning 3-145 (GFTEKQEALV…ELAAALKKAF (143 aa)) is the Globin domain. Residues Tyr26 and Tyr31 each carry the nitrated tyrosine modification. His62 contacts O2. Residues Lys65, His93, and Lys96 each coordinate heme b. Residue Tyr134 is modified to Nitrated tyrosine.

It belongs to the plant globin family. In terms of assembly, monomer. Post-translationally, nitrated in effective nodules and particularly in hypoxic conditions; this mechanism may play a protective role in the symbiosis by buffering toxic peroxynitrite NO(2)(-). Nitration level decrease during nodule senescence. As to expression, root nodules.

The protein localises to the cytoplasm. It localises to the cytosol. It is found in the nucleus. Functionally, leghemoglobin that reversibly binds oxygen O(2) through a pentacoordinated heme iron. In root nodules, facilitates the diffusion of oxygen to the bacteroids while preventing the bacterial nitrogenase from being inactivated by buffering dioxygen, nitric oxide and carbon monoxide, and promoting the formation of reactive oxygen species (ROS, e.g. H(2)O(2)). This role is essential for symbiotic nitrogen fixation (SNF). The protein is Leghemoglobin of Psophocarpus tetragonolobus (Winged bean).